Reading from the N-terminus, the 91-residue chain is Small ribosomal subunit protein bS16c (91 aa).

This sequence belongs to the bacterial ribosomal protein bS16 family.

The protein resides in the plastid. It localises to the chloroplast. The polypeptide is Small ribosomal subunit protein bS16c (Pelargonium hortorum (Common geranium)).